The chain runs to 436 residues: Serine hydroxymethyltransferase (436 aa).

(6S)-5,6,7,8-tetrahydrofolate contacts are provided by residues L133 and 137-139 (GHL). The residue at position 242 (K242) is an N6-(pyridoxal phosphate)lysine. 366 to 368 (SPF) serves as a coordination point for (6S)-5,6,7,8-tetrahydrofolate.

This sequence belongs to the SHMT family. As to quaternary structure, homodimer. The cofactor is pyridoxal 5'-phosphate.

It localises to the cytoplasm. It catalyses the reaction (6R)-5,10-methylene-5,6,7,8-tetrahydrofolate + glycine + H2O = (6S)-5,6,7,8-tetrahydrofolate + L-serine. Its pathway is one-carbon metabolism; tetrahydrofolate interconversion. It functions in the pathway amino-acid biosynthesis; glycine biosynthesis; glycine from L-serine: step 1/1. Functionally, catalyzes the reversible interconversion of serine and glycine with tetrahydrofolate (THF) serving as the one-carbon carrier. This reaction serves as the major source of one-carbon groups required for the biosynthesis of purines, thymidylate, methionine, and other important biomolecules. Also exhibits THF-independent aldolase activity toward beta-hydroxyamino acids, producing glycine and aldehydes, via a retro-aldol mechanism. The polypeptide is Serine hydroxymethyltransferase (Novosphingobium aromaticivorans (strain ATCC 700278 / DSM 12444 / CCUG 56034 / CIP 105152 / NBRC 16084 / F199)).